The chain runs to 622 residues: Chaperone protein HscA homolog (622 aa).

This sequence belongs to the heat shock protein 70 family.

Chaperone involved in the maturation of iron-sulfur cluster-containing proteins. Has a low intrinsic ATPase activity which is markedly stimulated by HscB. The sequence is that of Chaperone protein HscA homolog from Methylobacillus flagellatus (strain ATCC 51484 / DSM 6875 / VKM B-1610 / KT).